The chain runs to 206 residues: Oligoribonuclease (206 aa).

The 164-residue stretch at 20 to 183 (LVWLDMEMTG…ADIHESIDEL (164 aa)) folds into the Exonuclease domain. Tyr-141 is an active-site residue.

The protein belongs to the oligoribonuclease family.

Its subcellular location is the cytoplasm. In terms of biological role, 3'-to-5' exoribonuclease specific for small oligoribonucleotides. The chain is Oligoribonuclease from Burkholderia cenocepacia (strain HI2424).